The following is a 355-amino-acid chain: MIGRLNLITKSNLFKNVNNLNNKNYYSTCLVIAEHDNNQLLNSTLNTITAASKLGVTNISVLVAGSKCGPVADSVSKVSGVTNVVCVDHPTLEHSLAETITPIIVKLQSSSSKEGDEITHIFTPASNFGKNFLPRVAALLNVSQISEITKVKDAETFQRPIYAGNAIATVKSTDKCKVGTVRTTAFDKAPTSGGSAKVVSANDWAVPLIEKAISETNIKWESSEVKKSERPELTSARVVVSGGRGMKNGENFKMLEELADTLGGAVGASRAAVDSGFVSNDLQVGQTGKIVAPELYIAVGISGAIQHLAGMKDSKVIVAINKDPEAPIFQVADVGLVGDLFNEVPKLTESIKKSK.

295–323 is a binding site for FAD; the sequence is LYIAVGISGAIQHLAGMKDSKVIVAINKD.

Belongs to the ETF alpha-subunit/FixB family. In terms of assembly, heterodimer of an alpha and a beta subunit. It depends on FAD as a cofactor.

Its subcellular location is the mitochondrion matrix. Its function is as follows. The electron transfer flavoprotein serves as a specific electron acceptor for several dehydrogenases, including five acyl-CoA dehydrogenases, glutaryl-CoA and sarcosine dehydrogenase. It transfers the electrons to the main mitochondrial respiratory chain via ETF-ubiquinone oxidoreductase (ETF dehydrogenase). This is Electron transfer flavoprotein subunit alpha, mitochondrial (etfa) from Dictyostelium discoideum (Social amoeba).